We begin with the raw amino-acid sequence, 27 residues long: uncharacterized protein (27 aa).

A helical membrane pass occupies residues 3 to 23 (IILWAVLIIFLIGLLVVTGVF).

It is found in the cell inner membrane. This is an uncharacterized protein from Escherichia coli (strain K12).